The sequence spans 105 residues: Guanidinium exporter (105 aa).

Residues 1–21 (MSWIILVIAGLLEVVWAVGLK) traverse the membrane as a helical segment. Over 22 to 28 (YTHGFSR) the chain is Cytoplasmic. A helical membrane pass occupies residues 29-49 (LTPSVITVTAMIVSMALLAWA). The Periplasmic segment spans residues 50-57 (MKSLPVGT). Residues 58–78 (AYAVWTGIGAVGAAITGIVLL) form a helical membrane-spanning segment. The Cytoplasmic portion of the chain corresponds to 79–81 (GES). A helical membrane pass occupies residues 82–102 (ANPMRLASLALIVLGIIGLKL). The Periplasmic segment spans residues 103–105 (STH).

The protein belongs to the drug/metabolite transporter (DMT) superfamily. Small multidrug resistance (SMR) (TC 2.A.7.1) family. Gdx/SugE subfamily.

It localises to the cell inner membrane. Guanidinium ion exporter. Couples guanidinium export to the proton motive force, exchanging one guanidinium ion for two protons. This chain is Guanidinium exporter, found in Escherichia coli O157:H7.